The primary structure comprises 140 residues: Trafficking protein particle complex subunit 2-like protein (140 aa).

The protein belongs to the TRAPP small subunits family. Sedlin subfamily.

The chain is Trafficking protein particle complex subunit 2-like protein (trappc2l) from Dictyostelium discoideum (Social amoeba).